Reading from the N-terminus, the 529-residue chain is Cytochrome P450 monooxygenase CLM2 (529 aa).

The chain crosses the membrane as a helical span at residues 2–19 (LLIIVVLVGTLIYFLSFH). N244 and N281 each carry an N-linked (GlcNAc...) asparagine glycan. C438 contacts heme.

This sequence belongs to the cytochrome P450 family. Heme is required as a cofactor.

The protein resides in the membrane. The catalysed reaction is (-)-longiborneol + reduced [NADPH--hemoprotein reductase] + O2 = culmorin + oxidized [NADPH--hemoprotein reductase] + H2O + H(+). Its pathway is mycotoxin biosynthesis. Its function is as follows. Cytochrome P450 monooxygenase involved in the biosynthesis of culmorin, a tricyclic sesquiterpene diol reported to have antifungal activity and some phytotoxicity to wheat coleoptile tissue, contributing to Fusarium head blight disease. The terpene cyclase CLM1 is responsible for the cyclization of farnesyl diphosphate into the intermediate longiborneol. Longiborneol is then hydroxylated in a regio- and endo-stereoselective manner at position C-11 by the cytochrome P450 monooxygenase CLM2 to produce culmorin. Additional non-specific oxygenases are also able to hydroxylate longiborneol at other sites than C-11 leading to 3-hydroxylongiborneol, 5-hydroxylongiborneol, 12-hydroxylongiborneol and 15-hydroxylongiborneol. Moreover, another oxygenase capable of installing a C-11 exo-hydroxy group in longiborneol can also yield 11-epi-acetylculmorin. The production of these longiborneol derivatives is dwarfed by the high abundance of culmorin, suggesting that CLM2 displays superior enzymatic activity to the unidentified, possibly promiscuous, additional oxygenases. This is Cytochrome P450 monooxygenase CLM2 from Gibberella zeae (strain ATCC MYA-4620 / CBS 123657 / FGSC 9075 / NRRL 31084 / PH-1) (Wheat head blight fungus).